Here is a 198-residue protein sequence, read N- to C-terminus: Small ribosomal subunit protein uS4c (198 aa).

One can recognise an S4 RNA-binding domain in the interval 85–145; that stretch reads LRLDATIFRL…PKKFTIILIC (61 aa).

It belongs to the universal ribosomal protein uS4 family. Part of the 30S ribosomal subunit.

It is found in the plastid. Its subcellular location is the apicoplast. One of the primary rRNA binding proteins, it binds directly to 16S rRNA where it nucleates assembly of the body of the 30S subunit. In Toxoplasma gondii, this protein is Small ribosomal subunit protein uS4c (rps4).